We begin with the raw amino-acid sequence, 286 residues long: Putative ribosome-inactivating protein (286 aa).

The first 21 residues, 1–21 (MNRFSVLMCLVILSIFHGVPT), serve as a signal peptide directing secretion. Asparagine 103 and asparagine 110 each carry an N-linked (GlcNAc...) asparagine glycan. Glutamate 185 is a catalytic residue. N-linked (GlcNAc...) asparagine glycosylation occurs at asparagine 252.

Belongs to the ribosome-inactivating protein family. Type 1 RIP subfamily.

The catalysed reaction is Endohydrolysis of the N-glycosidic bond at one specific adenosine on the 28S rRNA.. The polypeptide is Putative ribosome-inactivating protein (Cucumis ficifolius (Cucumis figarei)).